The primary structure comprises 687 residues: RNA-binding protein VTS1 (687 aa).

A compositionally biased stretch (basic residues) spans 1–10; that stretch reads MASHTLRPHR. 3 disordered regions span residues 1 to 115, 248 to 341, and 526 to 598; these read MASH…TPEA, AAAK…PGIG, and SPFN…AGVA. Polar residues predominate over residues 29 to 41; it reads TRQSLGPPTSGNS. The span at 52–68 shows a compositional bias: low complexity; the sequence is GLASPSSPSQPRHVSSS. Residues 287-301 show a composition bias toward polar residues; the sequence is GLESNMSGRSRSKSP. Positions 305 to 324 are enriched in basic and acidic residues; it reads PRPKSTDFSGKPRESLRRES. Polar residues predominate over residues 526–539; sequence SPFNASAPSLQPGL. A compositionally biased stretch (low complexity) spans 550-566; it reads QSSHLNQHYNQHQQQHQ. Residues 585–597 are compositionally biased toward gly residues; it reads QTGGGGAGGGAGV. In terms of domain architecture, SAM spans 606–667; it reads KVLEDVPNWL…LKVFYNVRTK (62 aa).

Belongs to the VTS1 family. In terms of assembly, monomer. Binds to RNA.

It localises to the cytoplasm. It is found in the cytosol. The protein localises to the P-body. RNA-binding protein involved in post-transcriptional regulation through transcript degradation. The chain is RNA-binding protein VTS1 from Cryptococcus neoformans var. grubii serotype A (strain H99 / ATCC 208821 / CBS 10515 / FGSC 9487) (Filobasidiella neoformans var. grubii).